The following is a 210-amino-acid chain: Superoxide dismutase [Mn], mitochondrial (210 aa).

Mn(2+) is bound by residues histidine 29, histidine 77, aspartate 164, and histidine 168.

This sequence belongs to the iron/manganese superoxide dismutase family. As to quaternary structure, homotetramer. The cofactor is Mn(2+).

The protein resides in the mitochondrion matrix. The catalysed reaction is 2 superoxide + 2 H(+) = H2O2 + O2. Functionally, destroys superoxide anion radicals which are normally produced within the cells and which are toxic to biological systems. This chain is Superoxide dismutase [Mn], mitochondrial (sodB), found in Aspergillus oryzae (strain ATCC 42149 / RIB 40) (Yellow koji mold).